A 206-amino-acid chain; its full sequence is Superoxide dismutase [Mn] (206 aa).

Residues H30, H78, D166, and H170 each coordinate Mn(2+).

It belongs to the iron/manganese superoxide dismutase family. As to quaternary structure, homodimer. Mn(2+) is required as a cofactor.

It catalyses the reaction 2 superoxide + 2 H(+) = H2O2 + O2. Its function is as follows. Destroys superoxide anion radicals which are normally produced within the cells and which are toxic to biological systems. The sequence is that of Superoxide dismutase [Mn] (sodA) from Chlamydia trachomatis serovar D (strain ATCC VR-885 / DSM 19411 / UW-3/Cx).